The sequence spans 47 residues: MAKGKRTFQPNNRRRARVHGFRLRMRTRAGRAIVANRRSKGRRALTA.

This sequence belongs to the bacterial ribosomal protein bL34 family.

This chain is Large ribosomal subunit protein bL34 (rpmH), found in Mycolicibacterium smegmatis (strain ATCC 700084 / mc(2)155) (Mycobacterium smegmatis).